Here is a 337-residue protein sequence, read N- to C-terminus: DNA-directed RNA polymerase subunit alpha (337 aa).

Positions 1 to 233 are alpha N-terminal domain (alpha-NTD); the sequence is MIQKNWQELI…DQLSIFVNFE (233 aa). An alpha C-terminal domain (alpha-CTD) region spans residues 249 to 337; sequence FNPALLKKVD…DLAKRYEDQY (89 aa).

It belongs to the RNA polymerase alpha chain family. In terms of assembly, homodimer. The RNAP catalytic core consists of 2 alpha, 1 beta, 1 beta' and 1 omega subunit. When a sigma factor is associated with the core the holoenzyme is formed, which can initiate transcription.

It carries out the reaction RNA(n) + a ribonucleoside 5'-triphosphate = RNA(n+1) + diphosphate. DNA-dependent RNA polymerase catalyzes the transcription of DNA into RNA using the four ribonucleoside triphosphates as substrates. The protein is DNA-directed RNA polymerase subunit alpha of Brucella melitensis biotype 2 (strain ATCC 23457).